A 332-amino-acid chain; its full sequence is NADH-quinone oxidoreductase subunit H (332 aa).

9 consecutive transmembrane segments (helical) span residues 4–24 (FAFF…IFAS), 44–64 (IGPD…MIKL), 78–98 (FIFA…LAAI), 120–140 (VALL…FLGG), 165–185 (VGAL…LVDI), 194–214 (FSWL…ALFI), 255–275 (IAGA…FWII), 279–299 (IMMI…RAAF), and 312–332 (YLIL…AVLL).

It belongs to the complex I subunit 1 family. As to quaternary structure, NDH-1 is composed of 14 different subunits. Subunits NuoA, H, J, K, L, M, N constitute the membrane sector of the complex.

It is found in the cell inner membrane. It catalyses the reaction a quinone + NADH + 5 H(+)(in) = a quinol + NAD(+) + 4 H(+)(out). NDH-1 shuttles electrons from NADH, via FMN and iron-sulfur (Fe-S) centers, to quinones in the respiratory chain. The immediate electron acceptor for the enzyme in this species is believed to be ubiquinone. Couples the redox reaction to proton translocation (for every two electrons transferred, four hydrogen ions are translocated across the cytoplasmic membrane), and thus conserves the redox energy in a proton gradient. This subunit may bind ubiquinone. The chain is NADH-quinone oxidoreductase subunit H from Campylobacter jejuni subsp. doylei (strain ATCC BAA-1458 / RM4099 / 269.97).